The primary structure comprises 157 residues: Large ribosomal subunit protein mL59 (157 aa).

The protein belongs to the mitochondrion-specific ribosomal protein mL59 family. Component of the mitochondrial large ribosomal subunit (mt-LSU). Mature yeast 74S mitochondrial ribosomes consist of a small (37S) and a large (54S) subunit. The 37S small subunit contains a 15S ribosomal RNA (15S mt-rRNA) and 34 different proteins. The 54S large subunit contains a 21S rRNA (21S mt-rRNA) and 46 different proteins.

It is found in the mitochondrion. Its function is as follows. Component of the mitochondrial ribosome (mitoribosome), a dedicated translation machinery responsible for the synthesis of mitochondrial genome-encoded proteins, including at least some of the essential transmembrane subunits of the mitochondrial respiratory chain. The mitoribosomes are attached to the mitochondrial inner membrane and translation products are cotranslationally integrated into the membrane. The sequence is that of Large ribosomal subunit protein mL59 (MRPL25) from Saccharomyces cerevisiae (strain ATCC 204508 / S288c) (Baker's yeast).